A 156-amino-acid polypeptide reads, in one-letter code: Small ribosomal subunit protein uS7 (156 aa).

The protein belongs to the universal ribosomal protein uS7 family. Part of the 30S ribosomal subunit. Contacts proteins S9 and S11.

One of the primary rRNA binding proteins, it binds directly to 16S rRNA where it nucleates assembly of the head domain of the 30S subunit. Is located at the subunit interface close to the decoding center, probably blocks exit of the E-site tRNA. The sequence is that of Small ribosomal subunit protein uS7 from Colwellia psychrerythraea (strain 34H / ATCC BAA-681) (Vibrio psychroerythus).